The following is a 93-amino-acid chain: Secretoglobin family 3A member 2 (93 aa).

Positions 1–21 (MKLVTIFLLVTISLCSYSATA) are cleaved as a signal peptide.

It belongs to the secretoglobin family. UGRP subfamily. As to quaternary structure, homodimer; disulfide-linked. Monomer. Interacts with APOA1. In terms of tissue distribution, highly expressed in lung and trachea. Detected throughout the airway epithelium in lung, with slightly higher expression in large airways. Found in lung submucosal gland acinus where it localizes to serous-like cells. Probably expressed in club cells of the bronchioles. Not detected in other tissues tested.

The protein localises to the secreted. Its function is as follows. Secreted cytokine-like protein. Binds to the scavenger receptor MARCO. Can also bind to pathogens including the Gram-positive bacterium L.monocytogenes, the Gram-negative bacterium P.aeruginosa, and yeast. Strongly inhibits phospholipase A2 (PLA2G1B) activity. Seems to have anti-inflammatory effects in respiratory epithelium. Also has anti-fibrotic activity in lung. May play a role in fetal lung development and maturation. Promotes branching morphogenesis during early stages of lung development. In the pituitary, may inhibit production of follicle-stimulating hormone (FSH) and luteinizing hormone (LH). In Homo sapiens (Human), this protein is Secretoglobin family 3A member 2 (SCGB3A2).